The following is a 488-amino-acid chain: Ribulose bisphosphate carboxylase large chain (488 aa).

Residues Asn127 and Thr177 each contribute to the substrate site. Catalysis depends on Lys179, which acts as the Proton acceptor. Lys181 provides a ligand contact to substrate. Mg(2+)-binding residues include Lys205, Asp207, and Glu208. Lys205 is modified (N6-carboxylysine). The active-site Proton acceptor is the His297. Substrate-binding residues include Arg298, His330, and Ser382.

Belongs to the RuBisCO large chain family. Type I subfamily. Heterohexadecamer of 8 large chains and 8 small chains. Mg(2+) is required as a cofactor.

The protein localises to the plastid. Its subcellular location is the chloroplast. The catalysed reaction is 2 (2R)-3-phosphoglycerate + 2 H(+) = D-ribulose 1,5-bisphosphate + CO2 + H2O. It carries out the reaction D-ribulose 1,5-bisphosphate + O2 = 2-phosphoglycolate + (2R)-3-phosphoglycerate + 2 H(+). In terms of biological role, ruBisCO catalyzes two reactions: the carboxylation of D-ribulose 1,5-bisphosphate, the primary event in carbon dioxide fixation, as well as the oxidative fragmentation of the pentose substrate in the photorespiration process. Both reactions occur simultaneously and in competition at the same active site. The chain is Ribulose bisphosphate carboxylase large chain from Cyanidioschyzon merolae (strain NIES-3377 / 10D) (Unicellular red alga).